A 30-amino-acid polypeptide reads, in one-letter code: Beta/omega-theraphotoxin-Tp2a (30 aa).

3 cysteine pairs are disulfide-bonded: cysteine 2–cysteine 16, cysteine 9–cysteine 21, and cysteine 15–cysteine 25. A flexible tail region important for ability to inhibit Nav channel region spans residues 26–30 (KKKLW). The tract at residues 29–30 (LW) is hydrophobic dyad that anchors the toxin into the membrane while positioning it over the S3 helix of Nav1.7/SCN9A.

It belongs to the neurotoxin 30 (phrixotoxin) family. In terms of tissue distribution, expressed by the venom gland.

The protein localises to the secreted. Gating-modifier toxin that targets voltage-gated sodium channels with a selective activity on Nav1.7/SCN9A (IC(50)=1-1.5 nM). It inhibits both activation and inactivation. For inhibition of activation, it is 100-fold more selective for Nav1.7/SCN9A (IC(50)=0.26-3) than for other sodium channels (Nav1.2/SCN2A (IC(50)=40-540 nM), Nav1.3/SCN3A (IC(50)=102 nM), Nav1.4/SCN4A (IC(50)=30-39 nM), Nav1.5/SCN5A (IC(50)=19-90 nM), Nav1.6/SCN8A (IC(50)=26 nM), and Nav1.8/SCN10A (IC(50)=146 nM)). For inhibition of inactivation, it is 20-fold more potent in inhibiting inactivation on Nav1.7/SCN9A (IC(50)=250 nM) than other channels (about 4.6 uM for all channels). It also weakly inhibits Cav1.2/CACNA1C and Cav3.2/CACNA1H (29% block at 1 uM). It inhibits Nav1.7/SCN9A activation by interacting with DII and impairs Nav1.7/SCN9A inactivation by interacting with DIV. It docks on top of the DII S3 helix Nav1.7/SCN9A. It is about 60-fold less active on Nav1.7/SCN9A at depolarized potential (0 mV; IC(50)=15 nM), compared to -120 mV potential (IC(50)=0.26 nM). This toxin binds to lipid membrane. This ability correlates with hNav1.7/SCN9A inhibition, showing that membrane binding is the first step in the inhibitory mechanism of this toxin. It inhibits Nav1.2/SCN2A less potently when it is coexpressed with SCN2B or SCN4B than when it is expressed alone, showing that beta subunits (SCN2B and SCN4B) have a protective effect. This is Beta/omega-theraphotoxin-Tp2a from Thrixopelma pruriens (Peruvian green velvet tarantula).